A 445-amino-acid polypeptide reads, in one-letter code: Nuclear envelope integral membrane protein 1 (445 aa).

A signal peptide spans M1–G44. N-linked (GlcNAc...) asparagine glycosylation occurs at N125. The next 5 helical transmembrane spans lie at P161–S181, F186–I206, P216–F236, C245–C265, and L289–A309. Residues F186–Q297 form an a; required for its colocalization with lamins at the nuclear envelope region. A b; required for interaction with RAN-GTP region spans residues T336 to E405. A required for nuclear localization region spans residues T336–T445. S368, S424, and S425 each carry phosphoserine. The segment covering E418–S430 has biased composition (acidic residues). Positions E418 to T445 are disordered.

It belongs to the NEMP family. As to quaternary structure, homooligomer. Interacts with RAN-GTP. Interacts with EMD. Post-translationally, phosphorylation may regulate its interaction with RAN-GTP.

The protein resides in the nucleus inner membrane. The protein localises to the nucleus envelope. Functionally, together with EMD, contributes to nuclear envelope stiffness in germ cells. Required for female fertility. Essential for normal erythropoiesis. Required for efficient nuclear envelope opening and enucleation during the late stages of erythroblast maturation. The sequence is that of Nuclear envelope integral membrane protein 1 (NEMP1) from Bos taurus (Bovine).